The chain runs to 244 residues: 5-oxoprolinase subunit A (244 aa).

This sequence belongs to the LamB/PxpA family. As to quaternary structure, forms a complex composed of PxpA, PxpB and PxpC.

It catalyses the reaction 5-oxo-L-proline + ATP + 2 H2O = L-glutamate + ADP + phosphate + H(+). Its function is as follows. Catalyzes the cleavage of 5-oxoproline to form L-glutamate coupled to the hydrolysis of ATP to ADP and inorganic phosphate. This chain is 5-oxoprolinase subunit A, found in Escherichia coli O157:H7.